The primary structure comprises 367 residues: tRNA-specific 2-thiouridylase MnmA (367 aa).

Residues 6 to 13 and M32 contribute to the ATP site; that span reads AMSGGVDS. C101 (nucleophile) is an active-site residue. The cysteines at positions 101 and 193 are disulfide-linked. G125 serves as a coordination point for ATP. The interval 143–145 is interaction with tRNA; it reads KDQ. The Cysteine persulfide intermediate role is filled by C193.

It belongs to the MnmA/TRMU family.

The protein localises to the cytoplasm. It catalyses the reaction S-sulfanyl-L-cysteinyl-[protein] + uridine(34) in tRNA + AH2 + ATP = 2-thiouridine(34) in tRNA + L-cysteinyl-[protein] + A + AMP + diphosphate + H(+). Catalyzes the 2-thiolation of uridine at the wobble position (U34) of tRNA, leading to the formation of s(2)U34. The polypeptide is tRNA-specific 2-thiouridylase MnmA (Mycobacterium tuberculosis (strain CDC 1551 / Oshkosh)).